A 396-amino-acid chain; its full sequence is S-adenosylmethionine synthase 4 (396 aa).

Residue glutamate 13 coordinates Mg(2+). ATP is bound at residue histidine 19. A K(+)-binding site is contributed by glutamate 47. The L-methionine site is built by glutamate 60 and glutamine 103. Residues 171–173, 239–242, aspartate 250, 256–257, alanine 273, lysine 277, and lysine 281 each bind ATP; these read DGK, SGRF, and RK. L-methionine is bound at residue aspartate 250. Lysine 281 lines the L-methionine pocket.

This sequence belongs to the AdoMet synthase family. As to quaternary structure, homotetramer. The cofactor is Mn(2+). Mg(2+) serves as cofactor. It depends on Co(2+) as a cofactor. Requires K(+) as cofactor. Expressed in roots, stems and leaves (at protein level).

The protein resides in the cytoplasm. The enzyme catalyses L-methionine + ATP + H2O = S-adenosyl-L-methionine + phosphate + diphosphate. It functions in the pathway amino-acid biosynthesis; S-adenosyl-L-methionine biosynthesis; S-adenosyl-L-methionine from L-methionine: step 1/1. Catalyzes the formation of S-adenosylmethionine from methionine and ATP. The reaction comprises two steps that are both catalyzed by the same enzyme: formation of S-adenosylmethionine (AdoMet) and triphosphate, and subsequent hydrolysis of the triphosphate. May be involved in the synthesis of betain in response to abiotic stress such as high salinity. This Atriplex nummularia (Old man saltbush) protein is S-adenosylmethionine synthase 4 (SAMS4).